Reading from the N-terminus, the 793-residue chain is E3 UFM1-protein ligase 1 (793 aa).

An N-acetylalanine modification is found at Ala2. The segment at 2 to 200 (ADAWEEIRRL…RGLFSAITRP (199 aa)) is mediates interaction with DDRGK1. The segment at 2-212 (ADAWEEIRRL…VNSLVSKYGF (211 aa)) is required for E3 UFM1-protein ligase activity. The involved in CDK5RAP3-binding stretch occupies residues 121-250 (DRLSEEVNDK…KAVFVPDIYS (130 aa)). The interval 200-400 (PTAVNSLVSK…NPVHLITEED (201 aa)) is mediates interaction with TRIP4. Residues 410-473 (VNTNKKDKKD…SSHAGKKKPD (64 aa)) are disordered. Omega-N-methylarginine is present on Arg433. Residues Ser458 and Ser462 each carry the phosphoserine modification. The tract at residues 490 to 683 (IPDAPEEFIS…QLKVTEDPAL (194 aa)) is mediates interaction with CDK5RAP3. Phosphothreonine is present on Thr535. Residues 742–769 (NKKSGQGEDPSSDDLDKEQHDVTNTTRK) form a disordered region. Residues Ser752 and Ser753 each carry the phosphoserine modification. The segment covering 758–769 (KEQHDVTNTTRK) has biased composition (basic and acidic residues).

This sequence belongs to the UFL1 family. In terms of assembly, catalytic component of the UFM1 ribosome E3 ligase (UREL) complex, composed of UFL1, DDRGK1 and CDK5RAP3. Interacts with E2-like enzyme UFC1. Interacts with RELA. Interacts with NBN; promoting recruitment to double-strand breaks following DNA damage. Interacts (when phosphorylated) with YWHAG/14-3-3-gamma; sequestering UFL1 and preventing its association with PDCD1/PD-1 substrate. In terms of processing, ubiquitinated, leading to its degradation by the proteasome. Interaction with CDK5RAP3 protects both proteins against ubiquitination and degradation via the proteasome. Phosphorylated at Ser-462 by ATM, enhancing protein ligase activity and promoting ATM activation in a positive feedback loop. Phosphorylation at Thr-535 by AMPK promotes its interaction with YWHAG/14-3-3-gamma, thereby preventing UFL1 association with PDCD1/PD-1 substrate. As to expression, ubiquitously expressed with expression detected in brain, skeletal muscle, lung, heart, gall bladder, liver, small intestine, pancreas, spleen and kidney (at protein level). At 8 weeks after birth, high expression in the Purkinje cell layer of the cerebellum.

The protein localises to the endoplasmic reticulum membrane. It localises to the cytoplasm. Its subcellular location is the cytosol. The protein resides in the nucleus. It is found in the chromosome. In terms of biological role, E3 protein ligase that mediates ufmylation, the covalent attachment of the ubiquitin-like modifier UFM1 to lysine residues on target proteins, and which plays a key role in various processes, such as ribosome recycling, response to DNA damage, interferon response or reticulophagy (also called ER-phagy). Catalyzes ufmylation of many protein, such as CD274/PD-L1, CDK5RAP3, CYB5R3, DDRGK1, EIF6, histone H4, MRE11, P4HB, PDCD1/PD-1, TRIP4, RPN1, RPS20/uS10, RPL10/uL16, RPL26/uL24, SYVN1/HRD1 and TP53/p53. As part of the UREL complex, plays a key role in ribosome recycling by catalyzing mono-ufmylation of RPL26/uL24 subunit of the 60S ribosome. Ufmylation of RPL26/uL24 occurs on free 60S ribosomes following ribosome dissociation: it weakens the junction between post-termination 60S subunits and SEC61 translocons, promoting release and recycling of the large ribosomal subunit from the endoplasmic reticulum membrane. Ufmylation of RPL26/uL24 and subsequent 60S ribosome recycling either take place after normal termination of translation or after ribosome stalling during cotranslational translocation at the endoplasmic reticulum. Involved in reticulophagy in response to endoplasmic reticulum stress by mediating ufmylation of proteins such as CYB5R3 and RPN1, thereby promoting lysosomal degradation of ufmylated proteins. Ufmylation in response to endoplasmic reticulum stress is essential for processes such as hematopoiesis, blood vessel morphogenesis or inflammatory response. Mediates ufmylation of DDRGK1 and CDK5RAP3; the role of these modifications is however unclear: as both DDRGK1 and CDK5RAP3 act as substrate adapters for ufmylation, it is uncertain whether ufmylation of these proteins is, a collateral effect or is required for ufmylation. Acts as a negative regulator of T-cell activation by mediating ufmylation and stabilization of PDCD1/PD-1. Also involved in the response to DNA damage: recruited to double-strand break sites following DNA damage and mediates monoufmylation of histone H4 and ufmylation of MRE11. Mediates ufmylation of TP53/p53, promoting its stability. Catalyzes ufmylation of TRIP4, thereby playing a role in nuclear receptor-mediated transcription. Required for hematopoietic stem cell function and hematopoiesis. This Rattus norvegicus (Rat) protein is E3 UFM1-protein ligase 1.